Reading from the N-terminus, the 42-residue chain is uncharacterized protein (42 aa).

The segment at 20–42 is disordered; it reads RSGRAERGVRAHSPAWSERPTPN.

This is an uncharacterized protein from Escherichia coli.